The sequence spans 209 residues: MRPLTADLLLRAYASGVFPMARSRDENRLYWVDPEQRGILPLEAFHVPKSLRRTLRSERFDIRCDTAFEAVMRACGEATADRPETWINEQIIRLFVELFELGLGHSVEVWQDGELVGGLYGLALGAAFFGESMFSRRTDASKVALVHLVARLRHGGFRLLDTQFVTEHLKQFGAQEISRAAYQDRLADALAETAWFDRNATVAWEVALV.

Belongs to the L/F-transferase family.

The protein localises to the cytoplasm. The enzyme catalyses N-terminal L-lysyl-[protein] + L-leucyl-tRNA(Leu) = N-terminal L-leucyl-L-lysyl-[protein] + tRNA(Leu) + H(+). It carries out the reaction N-terminal L-arginyl-[protein] + L-leucyl-tRNA(Leu) = N-terminal L-leucyl-L-arginyl-[protein] + tRNA(Leu) + H(+). The catalysed reaction is L-phenylalanyl-tRNA(Phe) + an N-terminal L-alpha-aminoacyl-[protein] = an N-terminal L-phenylalanyl-L-alpha-aminoacyl-[protein] + tRNA(Phe). Functionally, functions in the N-end rule pathway of protein degradation where it conjugates Leu, Phe and, less efficiently, Met from aminoacyl-tRNAs to the N-termini of proteins containing an N-terminal arginine or lysine. This Paramagnetospirillum magneticum (strain ATCC 700264 / AMB-1) (Magnetospirillum magneticum) protein is Leucyl/phenylalanyl-tRNA--protein transferase.